Reading from the N-terminus, the 433-residue chain is Trigger factor (433 aa).

Positions 163 to 248 constitute a PPIase FKBP-type domain; it reads GDVVVLDFAA…VHAVKERRLP (86 aa).

It belongs to the FKBP-type PPIase family. Tig subfamily.

The protein localises to the cytoplasm. It carries out the reaction [protein]-peptidylproline (omega=180) = [protein]-peptidylproline (omega=0). Its function is as follows. Involved in protein export. Acts as a chaperone by maintaining the newly synthesized protein in an open conformation. Functions as a peptidyl-prolyl cis-trans isomerase. In Nitratidesulfovibrio vulgaris (strain ATCC 29579 / DSM 644 / CCUG 34227 / NCIMB 8303 / VKM B-1760 / Hildenborough) (Desulfovibrio vulgaris), this protein is Trigger factor.